The chain runs to 143 residues: Mite group 2 allergen Pso o 2 (143 aa).

An N-terminal signal peptide occupies residues 1–17 (MMKTLVVLAITLAVVSA). Intrachain disulfides connect cysteine 25–cysteine 134, cysteine 38–cysteine 43, and cysteine 89–cysteine 94.

It belongs to the NPC2 family.

It is found in the secreted. This chain is Mite group 2 allergen Pso o 2 (ALLA), found in Psoroptes ovis (Sheep scab mite).